The following is a 172-amino-acid chain: Urease accessory protein UreE (172 aa).

This sequence belongs to the UreE family.

The protein localises to the cytoplasm. In terms of biological role, involved in urease metallocenter assembly. Binds nickel. Probably functions as a nickel donor during metallocenter assembly. This Shewanella halifaxensis (strain HAW-EB4) protein is Urease accessory protein UreE.